Consider the following 691-residue polypeptide: Kinetochore protein NDC80 (691 aa).

A disordered region spans residues 1-95 (MQSSTSTDQH…LNDKSNSRNS (95 aa)). Residues 10-19 (HVLHHMDPHR) show a composition bias toward basic and acidic residues. A compositionally biased stretch (polar residues) spans 20 to 42 (FTSQIPTATSSQLRRRNSTNQGL). T38 carries the post-translational modification Phosphothreonine. Over residues 54–65 (TISGTGIPTGGI) the composition is skewed to low complexity. At T248 the chain carries Phosphothreonine. 2 coiled-coil regions span residues 376 to 446 (GKLE…SIKS) and 522 to 686 (KKSI…FETE).

This sequence belongs to the NDC80/HEC1 family. In terms of assembly, component of the NDC80 complex, which consists of NDC80, NUF2, SPC24 and SPC25. The NDC80 complex is formed by two subcomplexes, NDC80-NUF2 and SPC24-SPC25, which are joined end-to-end through their coiled-coil domains. It has a rod-like structure with a length of 570 Angstroms and globular domains at either end. The NDC80-NUF2 globular domains are probably directed to microtubules, the SPC24-SPC25 globular domains to the centromere. NDC80 probably interacts with SMC1 and SMC2. Also interacts with KIN3. Interacts with DMC1.

It is found in the nucleus. It localises to the chromosome. The protein localises to the centromere. The protein resides in the kinetochore. In terms of biological role, acts as a component of the essential kinetochore-associated NDC80 complex, which is involved in chromosome segregation and spindle checkpoint activity. This Saccharomyces cerevisiae (strain ATCC 204508 / S288c) (Baker's yeast) protein is Kinetochore protein NDC80.